We begin with the raw amino-acid sequence, 515 residues long: Bifunctional purine biosynthesis protein PurH (515 aa).

Residues 1–145 (MTKRALISVS…KNHASVTVVV (145 aa)) form the MGS-like domain.

The protein belongs to the PurH family.

The enzyme catalyses (6R)-10-formyltetrahydrofolate + 5-amino-1-(5-phospho-beta-D-ribosyl)imidazole-4-carboxamide = 5-formamido-1-(5-phospho-D-ribosyl)imidazole-4-carboxamide + (6S)-5,6,7,8-tetrahydrofolate. It carries out the reaction IMP + H2O = 5-formamido-1-(5-phospho-D-ribosyl)imidazole-4-carboxamide. The protein operates within purine metabolism; IMP biosynthesis via de novo pathway; 5-formamido-1-(5-phospho-D-ribosyl)imidazole-4-carboxamide from 5-amino-1-(5-phospho-D-ribosyl)imidazole-4-carboxamide (10-formyl THF route): step 1/1. It functions in the pathway purine metabolism; IMP biosynthesis via de novo pathway; IMP from 5-formamido-1-(5-phospho-D-ribosyl)imidazole-4-carboxamide: step 1/1. The chain is Bifunctional purine biosynthesis protein PurH from Streptococcus agalactiae serotype III (strain NEM316).